The chain runs to 431 residues: Ammonium transporter 3 (431 aa).

Topologically, residues 1–27 (MEQFSTSSSESSDSSSEYSLEFYMDTS) are extracellular. A helical transmembrane segment spans residues 28 to 48 (WVLDAANLVFFMQAGFGMLEA). At 49-63 (GMVRAKNTKSILLKN) the chain is on the cytoplasmic side. A helical membrane pass occupies residues 64-84 (LINTAICAISYYCVGHSFAYG). Residues 85-102 (KVNPNSFVGFGNFFLMDY) lie on the Extracellular side of the membrane. A helical membrane pass occupies residues 103–125 (THYAYWMIQWAYAATATTIATGA). The Cytoplasmic segment spans residues 126 to 134 (MAERLQLHC). Residues 135-155 (YILFTLVQTILIYPFVAHWIW) form a helical membrane-spanning segment. The Extracellular portion of the chain corresponds to 156–160 (SQNGW). The helical transmembrane segment at 161-181 (LFDLGIVDFAGGAVIHIVAGI) threads the bilayer. Residues 182 to 211 (TGACGSFLLGPRIGRFNQESGKPKNLPGHS) are Cytoplasmic-facing. A helical transmembrane segment spans residues 212 to 232 (VVLMSLGAMILWYSWYGYTAG). The Extracellular segment spans residues 233–249 (ASLGMTRSRVLPASRVS). A helical transmembrane segment spans residues 250 to 270 (VVVTLSGATGLITVLGIGKIF). The Cytoplasmic portion of the chain corresponds to 271–300 (NGHYDLVKGINGLIAGLVSSTSSCAYIEPW). A helical transmembrane segment spans residues 301–321 (AAIIIGFIGGIVYWFSSWALL). The Extracellular segment spans residues 322 to 333 (NWLRLDDPVDST). The chain crosses the membrane as a helical span at residues 334-354 (AIHLFGGCWSLISVAFFATHG). Residues 355 to 357 (RVR) lie on the Cytoplasmic side of the membrane. A helical transmembrane segment spans residues 358–378 (NPDIILPGGIFYGGGISLLWV). Gln379 is a topological domain (extracellular). Residues 380–400 (LVGMVLAILWAGFLSGIFFFT) form a helical membrane-spanning segment. The Cytoplasmic portion of the chain corresponds to 401–431 (MDYFGKLRVDVDTELAGLDNSNHGGSAYIFD).

The protein belongs to the ammonia transporter channel (TC 1.A.11.2) family.

Its subcellular location is the cell membrane. It localises to the endosome membrane. The protein localises to the cytoplasmic vesicle. It is found in the phagosome membrane. Its function is as follows. Ammonium transporter that mediates the import of ammonium in prespore cells. Controls ammonium homeostasis during growth and development. Ammonium has been shown to function as a morphogen at multiple steps during the development. May function as an ammonia sensor that relays information concerning ammonia concentrations to the signaling pathway involved in the slug versus culmination choice and regulates prestalk gene expression. This is Ammonium transporter 3 (amtC) from Dictyostelium discoideum (Social amoeba).